The sequence spans 377 residues: Hsc70-interacting protein 2 (377 aa).

The segment at 68–123 (AKANEPANAPEDSEDEKSLSDPESDVELDMEGVIEADSDPAQPMGNYSKKATEEEV) is disordered. Phosphoserine is present on Ser80. Residues 89 to 105 (PESDVELDMEGVIEADS) show a composition bias toward acidic residues. TPR repeat units follow at residues 126 to 159 (ASELRAQAASAYGQQKFDEAIALYTKAIELSPGN), 161 to 193 (LFHAKRGQAFLKLKKPNACIRDCDVALELNSDL), and 195 to 227 (AGYKFRGRARRLLGDFELAAHDLRQACKLDFDE). The stretch at 239 to 276 (NAKKIEQHRLKQERRQAERKIKERQRDQRRARKEQEKH) forms a coiled coil. Residues 243 to 277 (IEQHRLKQERRQAERKIKERQRDQRRARKEQEKHN) show a composition bias toward basic and acidic residues. Disordered stretches follow at residues 243-302 (IEQH…DILG) and 344-377 (DVGAAFGQAGEKAGKPSEPKPKKDSADFVDDGLD). Over residues 282 to 293 (GSSGEFSGGNPG) the composition is skewed to gly residues. Residues 294–336 (NGNMSDILGAMSDPEVSAAIQDILSNPGNITKYASNPKIYNLI) enclose the STI1 domain. Over residues 355–369 (KAGKPSEPKPKKDSA) the composition is skewed to basic and acidic residues.

It belongs to the FAM10 family. Homotetramer. Interacts with Hsc70 as well as DNAJ homologs and Hsp90.

It localises to the cytoplasm. Functionally, one HIP oligomer binds the ATPase domains of at least two Hsc70 molecules dependent on activation of the Hsc70 ATPase by Hsp40. Stabilizes the ADP state of Hsc70 that has a high affinity for substrate protein. Through its own chaperone activity, it may contribute to the interaction of Hsc70 with various target proteins. The sequence is that of Hsc70-interacting protein 2 from Drosophila melanogaster (Fruit fly).